Here is a 272-residue protein sequence, read N- to C-terminus: 2-amino-3,7-dideoxy-D-threo-hept-6-ulosonate synthase (272 aa).

Aspartate 33 functions as the Proton acceptor in the catalytic mechanism. Residues 33–37 (DHGVS) and 153–155 (YPR) contribute to the 1-deoxy-D-threo-hexo-2,5-diulose 6-phosphate site. The Proton donor role is filled by tyrosine 153. Catalysis depends on lysine 184, which acts as the Schiff-base intermediate with substrate. 1-deoxy-D-threo-hexo-2,5-diulose 6-phosphate-binding positions include 209-210 (GG) and 237-238 (GR).

Belongs to the DeoC/FbaB aldolase family. ADHS subfamily. Homodecamer.

The catalysed reaction is 1-deoxy-D-threo-hexo-2,5-diulose 6-phosphate + L-aspartate 4-semialdehyde = 2,3-dioxopropyl phosphate + 2-amino-2,3,7-trideoxy-D-lyxo-hept-6-ulosonate. Catalyzes a transaldol reaction between 6-deoxy-5-ketofructose 1-phosphate (DKFP) and L-aspartate semialdehyde (ASA) with an elimination of hydroxypyruvaldehyde phosphate to yield 2-amino-3,7-dideoxy-D-threo-hept-6-ulosonate (ADH). Plays a key role in an alternative pathway of the biosynthesis of 3-dehydroquinate (DHQ), which is involved in the canonical pathway for the biosynthesis of aromatic amino acids and which is also a precursor for the biosynthesis of p-aminobenzoic acid (PABA) in M.maripaludis. Does not possess fructose-bisphosphate (FBP) aldolase activity. In Methanococcus maripaludis (strain DSM 14266 / JCM 13030 / NBRC 101832 / S2 / LL), this protein is 2-amino-3,7-dideoxy-D-threo-hept-6-ulosonate synthase.